We begin with the raw amino-acid sequence, 213 residues long: Orotidine 5'-phosphate decarboxylase (213 aa).

Substrate is bound by residues Asp11, Lys33, 61 to 70 (DLKLADIPNT), Ser113, 166 to 176 (PGVGAQGGKAS), Gly189, and Arg190. Lys63 functions as the Proton donor in the catalytic mechanism.

The protein belongs to the OMP decarboxylase family. Type 1 subfamily. As to quaternary structure, homodimer.

It catalyses the reaction orotidine 5'-phosphate + H(+) = UMP + CO2. The protein operates within pyrimidine metabolism; UMP biosynthesis via de novo pathway; UMP from orotate: step 2/2. Catalyzes the decarboxylation of orotidine 5'-monophosphate (OMP) to uridine 5'-monophosphate (UMP). The polypeptide is Orotidine 5'-phosphate decarboxylase (Thermococcus kodakarensis (strain ATCC BAA-918 / JCM 12380 / KOD1) (Pyrococcus kodakaraensis (strain KOD1))).